The sequence spans 88 residues: LYR motif-containing protein 2 (88 aa).

The N-terminal 19 residues, 1 to 19, are a transit peptide targeting the mitochondrion; the sequence is MAVSRLPPAALSLKQFLQR.

The protein belongs to the complex I LYR family.

The protein resides in the mitochondrion. Functionally, involved in efficient integration of the N-module into mitochondrial respiratory chain complex I. In Danio rerio (Zebrafish), this protein is LYR motif-containing protein 2 (lyrm2).